We begin with the raw amino-acid sequence, 287 residues long: Bifunctional protein FolD (287 aa).

Residues 167 to 169 (GRS) and Thr192 each bind NADP(+).

Belongs to the tetrahydrofolate dehydrogenase/cyclohydrolase family. In terms of assembly, homodimer.

It carries out the reaction (6R)-5,10-methylene-5,6,7,8-tetrahydrofolate + NADP(+) = (6R)-5,10-methenyltetrahydrofolate + NADPH. The enzyme catalyses (6R)-5,10-methenyltetrahydrofolate + H2O = (6R)-10-formyltetrahydrofolate + H(+). The protein operates within one-carbon metabolism; tetrahydrofolate interconversion. Functionally, catalyzes the oxidation of 5,10-methylenetetrahydrofolate to 5,10-methenyltetrahydrofolate and then the hydrolysis of 5,10-methenyltetrahydrofolate to 10-formyltetrahydrofolate. The polypeptide is Bifunctional protein FolD (Sorangium cellulosum (strain So ce56) (Polyangium cellulosum (strain So ce56))).